Consider the following 127-residue polypeptide: Prefoldin subunit 6 (127 aa).

At alanine 2 the chain carries N-acetylalanine. Lysine 21 bears the N6-acetyllysine mark. Lysine 66 is subject to N6-acetyllysine; alternate. Lysine 66 is covalently cross-linked (Glycyl lysine isopeptide (Lys-Gly) (interchain with G-Cter in SUMO1); alternate). A Glycyl lysine isopeptide (Lys-Gly) (interchain with G-Cter in SUMO2); alternate cross-link involves residue lysine 66.

This sequence belongs to the prefoldin subunit beta family. As to quaternary structure, heterohexamer of two PFD-alpha type and four PFD-beta type subunits. Component of the PAQosome complex which is responsible for the biogenesis of several protein complexes and which consists of R2TP complex members RUVBL1, RUVBL2, RPAP3 and PIH1D1, URI complex members PFDN2, PFDN6, PDRG1, UXT and URI1 as well as ASDURF, POLR2E and DNAAF10/WDR92.

Its function is as follows. Binds specifically to cytosolic chaperonin (c-CPN) and transfers target proteins to it. Binds to nascent polypeptide chain and promotes folding in an environment in which there are many competing pathways for nonnative proteins. This chain is Prefoldin subunit 6 (Pfdn6), found in Mus musculus (Mouse).